The primary structure comprises 257 residues: UPF0246 protein CV_1250 (257 aa).

This sequence belongs to the UPF0246 family.

The chain is UPF0246 protein CV_1250 from Chromobacterium violaceum (strain ATCC 12472 / DSM 30191 / JCM 1249 / CCUG 213 / NBRC 12614 / NCIMB 9131 / NCTC 9757 / MK).